The sequence spans 723 residues: tRNA (guanine(27)-N(2))-dimethyltransferase (723 aa).

Residues 1–10 (MENMAEEELL) show a composition bias toward acidic residues. The disordered stretch occupies residues 1 to 72 (MENMAEEELL…SLASVPEEAE (72 aa)). Threonine 23 bears the Phosphothreonine mark. Over residues 32–44 (PAADTALDSAPTP) the composition is skewed to low complexity. The segment covering 45 to 59 (DSAPAPALAPAPAPA) has biased composition (pro residues). Residue serine 61 is modified to Phosphoserine. The Nucleolar localization signal signature appears at 128 to 132 (HKLRR). A C2H2-type zinc finger spans residues 177–199 (YHCIICSATITRRTDMLGHVKRH). Positions 220–679 (EVLKETDTDI…ASLTQFKSIL (460 aa)) constitute a Trm1 methyltransferase domain. Arginine 253, aspartate 300, aspartate 348, and alanine 349 together coordinate S-adenosyl-L-methionine. Positions 479, 482, 504, and 506 each coordinate Zn(2+). Lysine 576 participates in a covalent cross-link: Glycyl lysine isopeptide (Lys-Gly) (interchain with G-Cter in SUMO2). At serine 603 the chain carries Phosphoserine.

The protein belongs to the class I-like SAM-binding methyltransferase superfamily. Trm1 family.

It localises to the nucleus. The protein resides in the nucleolus. It carries out the reaction guanosine(27) in tRNA(Tyr) + 2 S-adenosyl-L-methionine = N(2)-dimethylguanosine(27) in tRNA(Tyr) + 2 S-adenosyl-L-homocysteine + 2 H(+). Its function is as follows. Specifically dimethylates a single guanine residue at position 27 of tRNA(Tyr) using S-adenosyl-L-methionine as donor of the methyl groups. Dimethylation at position 27 of tRNA(Tyr) is required for efficient translation of tyrosine codons. Also required to maintain 3-(3-amino-3-carboxypropyl)uridine (acp3U) in the D-loop of several cytoplasmic tRNAs. This is tRNA (guanine(27)-N(2))-dimethyltransferase from Rattus norvegicus (Rat).